We begin with the raw amino-acid sequence, 217 residues long: MSFLLHQSRFFTTVNHLRDLPATSQPEICFAGRSNAGKSTAINILCNQKRLAFASKTPGRTQHINYFSVGKADEPTAHLVDLPGYGYAEVPGAAKAHWEALLSTYLQTRSQLRGMILMMDSRRPLTDLDRRMIEWFAPTGKPIHTLLTKCDKLTRQESVNALRATQKGLAEYRTAGYQGELTAQLFSALKRVGIDEAHELIESWLIPSDKGETDAAQ.

Residues 24–207 (SQPEICFAGR…HELIESWLIP (184 aa)) form the EngB-type G domain. Residues 32–39 (GRSNAGKS), 59–63 (GRTQH), 81–84 (DLPG), 148–151 (TKCD), and 185–188 (LFSA) each bind GTP. The Mg(2+) site is built by Ser39 and Thr61.

The protein belongs to the TRAFAC class TrmE-Era-EngA-EngB-Septin-like GTPase superfamily. EngB GTPase family. Mg(2+) serves as cofactor.

Necessary for normal cell division and for the maintenance of normal septation. The protein is Probable GTP-binding protein EngB of Paraburkholderia phytofirmans (strain DSM 17436 / LMG 22146 / PsJN) (Burkholderia phytofirmans).